Here is a 156-residue protein sequence, read N- to C-terminus: Small ribosomal subunit protein uS7 (156 aa).

It belongs to the universal ribosomal protein uS7 family. Part of the 30S ribosomal subunit. Contacts proteins S9 and S11.

Functionally, one of the primary rRNA binding proteins, it binds directly to 16S rRNA where it nucleates assembly of the head domain of the 30S subunit. Is located at the subunit interface close to the decoding center, probably blocks exit of the E-site tRNA. The polypeptide is Small ribosomal subunit protein uS7 (Acholeplasma laidlawii (strain PG-8A)).